A 484-amino-acid chain; its full sequence is Probable efflux pump outer membrane protein TtgC (484 aa).

Residues 1–17 (MTKSLLSLAVTAFILGG) form the signal peptide. Residue Cys-18 is the site of N-palmitoyl cysteine attachment. Cys-18 carries the S-diacylglycerol cysteine lipid modification.

This sequence belongs to the outer membrane factor (OMF) (TC 1.B.17) family.

The protein resides in the cell outer membrane. Probable outer membrane component of the TtgABC efflux pump with unknown specificity. This chain is Probable efflux pump outer membrane protein TtgC (ttgC), found in Pseudomonas putida (strain ATCC 47054 / DSM 6125 / CFBP 8728 / NCIMB 11950 / KT2440).